The following is a 238-amino-acid chain: Ion-translocating oxidoreductase complex subunit E (238 aa).

5 helical membrane passes run 41-61, 71-91, 95-115, 130-150, and 184-204; these read LGLG…VSLV, LPAF…LMQA, ELYQ…VILG, SFDG…LGGL, and GFLL…LIAL.

It belongs to the NqrDE/RnfAE family. As to quaternary structure, the complex is composed of six subunits: RnfA, RnfB, RnfC, RnfD, RnfE and RnfG.

The protein resides in the cell inner membrane. In terms of biological role, part of a membrane-bound complex that couples electron transfer with translocation of ions across the membrane. In Pseudomonas aeruginosa (strain UCBPP-PA14), this protein is Ion-translocating oxidoreductase complex subunit E.